Reading from the N-terminus, the 303-residue chain is tRNA pseudouridine synthase B (303 aa).

Aspartate 47 acts as the Nucleophile in catalysis.

It belongs to the pseudouridine synthase TruB family. Type 1 subfamily.

The catalysed reaction is uridine(55) in tRNA = pseudouridine(55) in tRNA. Its function is as follows. Responsible for synthesis of pseudouridine from uracil-55 in the psi GC loop of transfer RNAs. This Roseobacter denitrificans (strain ATCC 33942 / OCh 114) (Erythrobacter sp. (strain OCh 114)) protein is tRNA pseudouridine synthase B.